The chain runs to 265 residues: Metallo-beta-lactamase VIM-7 (265 aa).

Residues 1–17 (MFQIRSFLVGISAFVMA) form the signal peptide. Zn(2+) contacts are provided by H113, H115, D117, H178, C197, and H239.

It belongs to the metallo-beta-lactamase superfamily. Class-B beta-lactamase family. In terms of assembly, monomer. The cofactor is Zn(2+).

Its subcellular location is the periplasm. The catalysed reaction is a beta-lactam + H2O = a substituted beta-amino acid. Its function is as follows. Class B beta-lactamase which confers resistance to the beta-lactam antibiotics, including penicillins, cephalosporins and carbapenems. Acts via hydrolysis of the beta-lactam ring. Has penicillin-, cephalosporin- and carbapenem-hydrolyzing activities. The protein is Metallo-beta-lactamase VIM-7 of Pseudomonas aeruginosa.